The primary structure comprises 100 residues: Urease subunit gamma (100 aa).

This sequence belongs to the urease gamma subunit family. As to quaternary structure, heterotrimer of UreA (gamma), UreB (beta) and UreC (alpha) subunits. Three heterotrimers associate to form the active enzyme.

The protein localises to the cytoplasm. The catalysed reaction is urea + 2 H2O + H(+) = hydrogencarbonate + 2 NH4(+). Its pathway is nitrogen metabolism; urea degradation; CO(2) and NH(3) from urea (urease route): step 1/1. In Nitrosococcus oceani (strain ATCC 19707 / BCRC 17464 / JCM 30415 / NCIMB 11848 / C-107), this protein is Urease subunit gamma.